We begin with the raw amino-acid sequence, 471 residues long: Glutamate--tRNA ligase (471 aa).

Residues 9-19 (PSPTGYLHVGG) carry the 'HIGH' region motif. Zn(2+) is bound by residues Cys-98, Cys-100, Cys-125, and His-127. Positions 237–241 (KLSKR) match the 'KMSKS' region motif. Lys-240 contacts ATP.

It belongs to the class-I aminoacyl-tRNA synthetase family. Glutamate--tRNA ligase type 1 subfamily. In terms of assembly, monomer. Zn(2+) serves as cofactor.

Its subcellular location is the cytoplasm. The catalysed reaction is tRNA(Glu) + L-glutamate + ATP = L-glutamyl-tRNA(Glu) + AMP + diphosphate. Catalyzes the attachment of glutamate to tRNA(Glu) in a two-step reaction: glutamate is first activated by ATP to form Glu-AMP and then transferred to the acceptor end of tRNA(Glu). In Escherichia coli O1:K1 / APEC, this protein is Glutamate--tRNA ligase.